Here is a 380-residue protein sequence, read N- to C-terminus: Cytochrome b (380 aa).

4 consecutive transmembrane segments (helical) span residues 33-53, 77-98, 113-133, and 178-198; these read FGSLLGLCLATQILTGLFLAM, WLIRNIHANGASFFFICIYMHI, WNIGVVLLLLTMMTAFVGYVL, and FFAFHFLFPFVIAAATVLHLL. Heme b is bound by residues histidine 83 and histidine 97. Residues histidine 182 and histidine 196 each coordinate heme b. A ubiquinone is bound at residue histidine 201. 4 consecutive transmembrane segments (helical) span residues 226–246, 288–308, 320–340, and 347–367; these read YKDLLGFVAMLLGLTSLALFA, LGGVLALLFSILVLMVVPILH, LTQFLFWALVADMLILTWIGG, and FIIIGQIASVIYFTIFLVLSP.

The protein belongs to the cytochrome b family. In terms of assembly, the cytochrome bc1 complex contains 3 respiratory subunits (MT-CYB, CYC1 and UQCRFS1), 2 core proteins (UQCRC1 and UQCRC2) and probably 6 low-molecular weight proteins. Requires heme b as cofactor.

It localises to the mitochondrion inner membrane. Component of the ubiquinol-cytochrome c reductase complex (complex III or cytochrome b-c1 complex) that is part of the mitochondrial respiratory chain. The b-c1 complex mediates electron transfer from ubiquinol to cytochrome c. Contributes to the generation of a proton gradient across the mitochondrial membrane that is then used for ATP synthesis. The chain is Cytochrome b (mt-cyb) from Oncorhynchus keta (Chum salmon).